We begin with the raw amino-acid sequence, 417 residues long: Phosphoglycerate kinase, cytosolic (417 aa).

Residues V23, D24, F25, N26, R39, S61, H62, G64, R65, R132, H168, and R169 each coordinate (2R)-3-phosphoglycerate. Residues G214 and A215 each contribute to the ADP site. G214 contacts CDP. Positions 215 and 216 each coordinate AMP. A215 provides a ligand contact to ATP. A Mg(2+)-binding site is contributed by A215. K216 lines the (2R)-3-phosphoglycerate pocket. D219 provides a ligand contact to CDP. D219 serves as a coordination point for Mg(2+). Positions 220 and 238 each coordinate ADP. Residue K220 participates in AMP binding. K220 serves as a coordination point for ATP. G238 provides a ligand contact to CDP. Positions 239 and 311 each coordinate AMP. 2 residues coordinate ATP: A239 and A311. ADP-binding residues include A311 and N335. G336 and F341 together coordinate CDP. ADP contacts are provided by F341, E342, D374, and T375. Residue E342 participates in AMP binding. E342, D374, and T375 together coordinate ATP. Residue D374 coordinates Mg(2+).

It belongs to the phosphoglycerate kinase family. As to quaternary structure, monomer. Requires Mg(2+) as cofactor.

The protein localises to the cytoplasm. It carries out the reaction (2R)-3-phosphoglycerate + ATP = (2R)-3-phospho-glyceroyl phosphate + ADP. It functions in the pathway carbohydrate degradation; glycolysis; pyruvate from D-glyceraldehyde 3-phosphate: step 2/5. This is Phosphoglycerate kinase, cytosolic (PGKB) from Leishmania mexicana.